We begin with the raw amino-acid sequence, 312 residues long: Phosphatidate cytidylyltransferase (312 aa).

The disordered stretch occupies residues 1 to 31; the sequence is MASTDPGTGTPLDESVPGIKRAMRQSTKNTP. Helical transmembrane passes span 37–57, 58–78, 85–105, 110–130, 157–177, 186–206, 223–243, and 247–267; these read LPAAIAVGLSIGGVLVATLVF, APRIWVVLCAGAIFVASHEVV, GYVIPAIPLLIGGQFTVWLTW, VGALAGFGATVVVCMIWRLVM, ATVFLAAWVPLFASFAALLVY, FCLMIAVVASDVGGYTVGVLF, GFAGSLVCGTTATILTATFLA, and PWVGALLSFVLVLTCTLGDLV.

It belongs to the CDS family.

Its subcellular location is the cell membrane. The catalysed reaction is a 1,2-diacyl-sn-glycero-3-phosphate + CTP + H(+) = a CDP-1,2-diacyl-sn-glycerol + diphosphate. It participates in phospholipid metabolism; CDP-diacylglycerol biosynthesis; CDP-diacylglycerol from sn-glycerol 3-phosphate: step 3/3. The polypeptide is Phosphatidate cytidylyltransferase (cdsA) (Mycobacterium leprae (strain TN)).